A 457-amino-acid polypeptide reads, in one-letter code: Multidrug resistance protein MdtK (457 aa).

12 consecutive transmembrane segments (helical) span residues 11 to 31, 53 to 73, 93 to 113, 127 to 147, 160 to 180, 189 to 209, 243 to 263, 276 to 296, 314 to 334, 350 to 370, 387 to 407, and 418 to 438; these read LLAL…MGFV, IWLP…PVIA, WLAG…GYII, AVGY…FQVA, GMVM…IFIY, GGVG…LAMV, LPIA…ALLV, IALN…AAVT, AART…IFTV, VVTL…SDSI, IFYI…YILA, and PAGF…MMML.

Belongs to the multi antimicrobial extrusion (MATE) (TC 2.A.66.1) family. MdtK subfamily.

The protein resides in the cell inner membrane. Functionally, multidrug efflux pump that functions probably as a Na(+)/drug antiporter. In Escherichia coli O139:H28 (strain E24377A / ETEC), this protein is Multidrug resistance protein MdtK.